Here is a 592-residue protein sequence, read N- to C-terminus: E3 ubiquitin-protein ligase RNF180 (592 aa).

Over 1–564 (MKRSEESTST…DSRGWWFDMD (564 aa)) the chain is Cytoplasmic. Ser231 carries the post-translational modification Phosphoserine. Positions 282–489 (QSPPSFDPNM…VFLQTELNNA (208 aa)) are interaction with ZIC2. Residues 432 to 474 (CAVCLDVYFNPYMCYPCHHIFCEPCLRTLAKDNPASTPCPLCR) form an RING-type zinc finger. A helical transmembrane segment spans residues 565 to 585 (MVIIYIYSVNWVIGFVVFCFL). Residues 586–592 (CYFFFPF) lie on the Extracellular side of the membrane.

In terms of assembly, interacts with ZIC2. In terms of tissue distribution, brain, kidney, testis and uterus. membrane protein. Nucleus envelope.

It localises to the endoplasmic reticulum membrane. The protein localises to the nucleus envelope. The enzyme catalyses S-ubiquitinyl-[E2 ubiquitin-conjugating enzyme]-L-cysteine + [acceptor protein]-L-lysine = [E2 ubiquitin-conjugating enzyme]-L-cysteine + N(6)-ubiquitinyl-[acceptor protein]-L-lysine.. It participates in protein modification; protein ubiquitination. Its function is as follows. E3 ubiquitin-protein ligase which promotes polyubiquitination and degradation by the proteasome pathway of ZIC2. The chain is E3 ubiquitin-protein ligase RNF180 (Rnf180) from Mus musculus (Mouse).